The primary structure comprises 773 residues: DC-STAMP domain-containing protein 2 (773 aa).

Residues 1 to 26 lie on the Cytoplasmic side of the membrane; the sequence is MPKVMKDVVHPLGGEEPSMARAVVRS. A helical membrane pass occupies residues 27 to 47; that stretch reads VGGFTLGLSLATAYGLLELLV. The Extracellular segment spans residues 48–51; it reads EGHS. A helical membrane pass occupies residues 52–72; that stretch reads PWGCLVGTLTLAAFLSLGMGF. At 73 to 233 the chain is on the cytoplasmic side; that stretch reads SRQVRATVLL…IPQAYHLCYV (161 aa). A helical transmembrane segment spans residues 234–254; the sequence is LMPFKLALCGLASLVQVFCVI. At 255–322 the chain is on the extracellular side; that stretch reads PKYIQPFLRQ…SMKLHRVREA (68 aa). Asparagine 284 and asparagine 296 each carry an N-linked (GlcNAc...) asparagine glycan. A helical transmembrane segment spans residues 323 to 343; it reads LALMGFTTPLLLVLLYLQALF. Residues 344–415 are Cytoplasmic-facing; sequence YRYCYLNWDH…ILETFNLIRH (72 aa). The chain crosses the membrane as a helical span at residues 416 to 436; the sequence is LLLVLFLVFLDYAVFWVLDLA. At 437 to 499 the chain is on the extracellular side; that stretch reads RHQLQGEIVA…LRPSEPDSTG (63 aa). An N-linked (GlcNAc...) asparagine glycan is attached at asparagine 480. Residues 500–520 form a helical membrane-spanning segment; that stretch reads YIVIGVMYGLCFFITLFGSYV. Over 521–773 the chain is Cytoplasmic; it reads SRLRRVICAS…LPDPSHPPPK (253 aa). Residues 692 to 701 are compositionally biased toward low complexity; that stretch reads SLSMESTSES. Positions 692–773 are disordered; that stretch reads SLSMESTSES…LPDPSHPPPK (82 aa). Pro residues predominate over residues 758–773; the sequence is PLSPPSLPDPSHPPPK.

In terms of assembly, interacts with DCST1.

The protein resides in the cytoplasmic vesicle. Its subcellular location is the secretory vesicle. It localises to the acrosome membrane. In terms of biological role, essential sperm cell-surface protein required for sperm-egg fusion and fertilization. The polypeptide is DC-STAMP domain-containing protein 2 (DCST2) (Homo sapiens (Human)).